Reading from the N-terminus, the 183-residue chain is uncharacterized protein (183 aa).

Positions 136–183 are disordered; that stretch reads EPPASVPSKQSGRSDKKKSTRKSPTFRNRPDFRKNKGRQLNKTTKQKK. Residues 170-183 show a composition bias toward basic residues; the sequence is NKGRQLNKTTKQKK.

This is an uncharacterized protein from Homo sapiens (Human).